Reading from the N-terminus, the 512-residue chain is Cytokinin hydroxylase (512 aa).

A helical membrane pass occupies residues 2–22 (MVTLVLKYVLVIVMTLILRVL). C458 contacts heme.

This sequence belongs to the cytochrome P450 family. It depends on heme as a cofactor. In terms of tissue distribution, specifically expressed in roots.

The protein localises to the membrane. The catalysed reaction is N(6)-(dimethylallyl)adenosine 5'-phosphate + NADPH + O2 + H(+) = 9-ribosyl-trans-zeatin 5'-phosphate + NADP(+) + H2O. It carries out the reaction N(6)-(dimethylallyl)adenosine 5'-diphosphate + NADPH + O2 + H(+) = 9-ribosyl-trans-zeatin 5'-diphosphate + NADP(+) + H2O. The enzyme catalyses N(6)-(dimethylallyl)adenosine 5'-triphosphate + NADPH + O2 + H(+) = 9-ribosyl-trans-zeatin 5'-triphosphate + NADP(+) + H2O. Cytokinin hydroxylase that catalyzes the biosynthesis of trans-zeatin via the isopentenyladenine riboside 5'-monophosphate (iPRMP)-dependent pathway. Can use isopentenyladenosine-5'-monophosphate, isopentenyladenosine-5'-diphosphate and isopentenyladenosine-5'-triphosphate as substrate. This chain is Cytokinin hydroxylase (CYP735A2), found in Arabidopsis thaliana (Mouse-ear cress).